The following is a 206-amino-acid chain: Small ribosomal subunit protein uS4 (206 aa).

Positions 96–156 (GRLDNVVYRM…EKAKKQSRVK (61 aa)) constitute an S4 RNA-binding domain.

The protein belongs to the universal ribosomal protein uS4 family. As to quaternary structure, part of the 30S ribosomal subunit. Contacts protein S5. The interaction surface between S4 and S5 is involved in control of translational fidelity.

One of the primary rRNA binding proteins, it binds directly to 16S rRNA where it nucleates assembly of the body of the 30S subunit. Its function is as follows. With S5 and S12 plays an important role in translational accuracy. This Salmonella typhi protein is Small ribosomal subunit protein uS4.